The following is a 719-amino-acid chain: Fatty acid oxidation complex subunit alpha (719 aa).

Residues 1 to 190 (MIYQGNRITV…KLGLVDAVVA (190 aa)) are enoyl-CoA hydratase/isomerase. Asp-298 lines the substrate pocket. The interval 313–719 (HDINEAAVLG…AAGETFYPKA (407 aa)) is 3-hydroxyacyl-CoA dehydrogenase. NAD(+)-binding positions include Met-326, Asp-345, 402–404 (VVE), Lys-409, and Ser-431. Catalysis depends on His-452, which acts as the For 3-hydroxyacyl-CoA dehydrogenase activity. NAD(+) is bound at residue Asn-455. Substrate is bound at residue Asn-502.

In the N-terminal section; belongs to the enoyl-CoA hydratase/isomerase family. It in the C-terminal section; belongs to the 3-hydroxyacyl-CoA dehydrogenase family. As to quaternary structure, heterotetramer of two alpha chains (FadB) and two beta chains (FadA).

The enzyme catalyses a (3S)-3-hydroxyacyl-CoA + NAD(+) = a 3-oxoacyl-CoA + NADH + H(+). It carries out the reaction a (3S)-3-hydroxyacyl-CoA = a (2E)-enoyl-CoA + H2O. The catalysed reaction is a 4-saturated-(3S)-3-hydroxyacyl-CoA = a (3E)-enoyl-CoA + H2O. It catalyses the reaction (3S)-3-hydroxybutanoyl-CoA = (3R)-3-hydroxybutanoyl-CoA. The enzyme catalyses a (3Z)-enoyl-CoA = a 4-saturated (2E)-enoyl-CoA. It carries out the reaction a (3E)-enoyl-CoA = a 4-saturated (2E)-enoyl-CoA. It functions in the pathway lipid metabolism; fatty acid beta-oxidation. Its function is as follows. Involved in the aerobic and anaerobic degradation of long-chain fatty acids via beta-oxidation cycle. Catalyzes the formation of 3-oxoacyl-CoA from enoyl-CoA via L-3-hydroxyacyl-CoA. It can also use D-3-hydroxyacyl-CoA and cis-3-enoyl-CoA as substrate. In Psychrobacter sp. (strain PRwf-1), this protein is Fatty acid oxidation complex subunit alpha.